The primary structure comprises 235 residues: Cytochrome c oxidase subunit 2 (235 aa).

The Mitochondrial intermembrane portion of the chain corresponds to 1–14; the sequence is MPYPMQLGFQDATS. A helical membrane pass occupies residues 15–45; sequence PIMEELMYFHDHTLMIVFLISSLVLYIIILM. Residues 46–59 lie on the Mitochondrial matrix side of the membrane; the sequence is LTTKLTHTSTMDAQ. Residues 60 to 87 traverse the membrane as a helical segment; the sequence is EVETIWTILPAVILILIALPSLRILYMM. The Mitochondrial intermembrane segment spans residues 88-235; it reads DEIYNPYLTV…MQSFLSYLYI (148 aa). Positions 161, 196, 198, 200, 204, and 207 each coordinate Cu cation. Glutamate 198 contacts Mg(2+). Tyrosine 218 carries the phosphotyrosine modification.

This sequence belongs to the cytochrome c oxidase subunit 2 family. As to quaternary structure, component of the cytochrome c oxidase (complex IV, CIV), a multisubunit enzyme composed of 14 subunits. The complex is composed of a catalytic core of 3 subunits MT-CO1, MT-CO2 and MT-CO3, encoded in the mitochondrial DNA, and 11 supernumerary subunits COX4I, COX5A, COX5B, COX6A, COX6B, COX6C, COX7A, COX7B, COX7C, COX8 and NDUFA4, which are encoded in the nuclear genome. The complex exists as a monomer or a dimer and forms supercomplexes (SCs) in the inner mitochondrial membrane with NADH-ubiquinone oxidoreductase (complex I, CI) and ubiquinol-cytochrome c oxidoreductase (cytochrome b-c1 complex, complex III, CIII), resulting in different assemblies (supercomplex SCI(1)III(2)IV(1) and megacomplex MCI(2)III(2)IV(2)). Found in a complex with TMEM177, COA6, COX18, COX20, SCO1 and SCO2. Interacts with TMEM177 in a COX20-dependent manner. Interacts with COX20. Interacts with COX16. The cofactor is Cu cation.

It localises to the mitochondrion inner membrane. It catalyses the reaction 4 Fe(II)-[cytochrome c] + O2 + 8 H(+)(in) = 4 Fe(III)-[cytochrome c] + 2 H2O + 4 H(+)(out). Component of the cytochrome c oxidase, the last enzyme in the mitochondrial electron transport chain which drives oxidative phosphorylation. The respiratory chain contains 3 multisubunit complexes succinate dehydrogenase (complex II, CII), ubiquinol-cytochrome c oxidoreductase (cytochrome b-c1 complex, complex III, CIII) and cytochrome c oxidase (complex IV, CIV), that cooperate to transfer electrons derived from NADH and succinate to molecular oxygen, creating an electrochemical gradient over the inner membrane that drives transmembrane transport and the ATP synthase. Cytochrome c oxidase is the component of the respiratory chain that catalyzes the reduction of oxygen to water. Electrons originating from reduced cytochrome c in the intermembrane space (IMS) are transferred via the dinuclear copper A center (CU(A)) of subunit 2 and heme A of subunit 1 to the active site in subunit 1, a binuclear center (BNC) formed by heme A3 and copper B (CU(B)). The BNC reduces molecular oxygen to 2 water molecules using 4 electrons from cytochrome c in the IMS and 4 protons from the mitochondrial matrix. This chain is Cytochrome c oxidase subunit 2 (MT-CO2), found in Didelphis virginiana (North American opossum).